Here is a 283-residue protein sequence, read N- to C-terminus: Thymidylate synthase (283 aa).

Residue Arg22 participates in dUMP binding. Catalysis depends on Cys160, which acts as the Nucleophile. DUMP-binding positions include 180 to 183 (RSCD), Asn191, and 221 to 223 (HIY). Position 183 (Asp183) interacts with (6R)-5,10-methylene-5,6,7,8-tetrahydrofolate. (6R)-5,10-methylene-5,6,7,8-tetrahydrofolate is bound at residue Ser282.

It belongs to the thymidylate synthase family. Bacterial-type ThyA subfamily. As to quaternary structure, homodimer.

The protein resides in the cytoplasm. The enzyme catalyses dUMP + (6R)-5,10-methylene-5,6,7,8-tetrahydrofolate = 7,8-dihydrofolate + dTMP. It functions in the pathway pyrimidine metabolism; dTTP biosynthesis. Functionally, catalyzes the reductive methylation of 2'-deoxyuridine-5'-monophosphate (dUMP) to 2'-deoxythymidine-5'-monophosphate (dTMP) while utilizing 5,10-methylenetetrahydrofolate (mTHF) as the methyl donor and reductant in the reaction, yielding dihydrofolate (DHF) as a by-product. This enzymatic reaction provides an intracellular de novo source of dTMP, an essential precursor for DNA biosynthesis. The chain is Thymidylate synthase from Vibrio vulnificus (strain YJ016).